The chain runs to 540 residues: Chaperonin GroEL (540 aa).

Residues 30–33, K51, 87–91, G415, and D495 each bind ATP; these read TLGP and DGTTT.

The protein belongs to the chaperonin (HSP60) family. As to quaternary structure, forms a cylinder of 14 subunits composed of two heptameric rings stacked back-to-back. Interacts with the co-chaperonin GroES.

It is found in the cytoplasm. The catalysed reaction is ATP + H2O + a folded polypeptide = ADP + phosphate + an unfolded polypeptide.. Functionally, together with its co-chaperonin GroES, plays an essential role in assisting protein folding. The GroEL-GroES system forms a nano-cage that allows encapsulation of the non-native substrate proteins and provides a physical environment optimized to promote and accelerate protein folding. The sequence is that of Chaperonin GroEL from Erwinia aphidicola.